We begin with the raw amino-acid sequence, 422 residues long: MFYDRARIFVKGGDGGNGCVAMRREKYVPEGGPWGGDGGRGGNVILRADGGLRTLVDFRYKRHYKAERGRHGEGKNMHGASGEDLVIRVPAGTVVKDAATGELIADLVRDGQEAVVARGGRGGRGNARFVTPQNRAPRMAEKGEPGEERWLDLELKLLADVGLVGFPNAGKSTLISRVSAARPKIASYPFTTITPNLGVVRVDDGRSFVMADIPGLIEGAHKGAGLGHDFLRHVERTRLLVHVLDTAGSEGRDPVQDFLVTNRELSLYNPALGRRPQVIAANKMDLDGAAENLARLKEAYGGKYEIFPVSAVTGQGLEALVYRVSALLEEIPAGAAVPEALERPVIHQAGPRFTVCREEGVFLVGGKEIERHVVMTDLKNEEAVERLQRIIRRMGIEEALKEAGIKDGDTVRIGDYEFEYVE.

The Obg domain occupies 1–158 (MFYDRARIFV…RWLDLELKLL (158 aa)). In terms of domain architecture, OBG-type G spans 159–329 (ADVGLVGFPN…LVYRVSALLE (171 aa)). GTP contacts are provided by residues 165 to 172 (GFPNAGKS), 190 to 194 (FTTIT), 212 to 215 (DIPG), 282 to 285 (NKMD), and 310 to 312 (SAV). Residues serine 172 and threonine 192 each coordinate Mg(2+). The OCT domain occupies 337-422 (VPEALERPVI…IGDYEFEYVE (86 aa)).

This sequence belongs to the TRAFAC class OBG-HflX-like GTPase superfamily. OBG GTPase family. As to quaternary structure, monomer. Mg(2+) is required as a cofactor.

It is found in the cytoplasm. An essential GTPase which binds GTP, GDP and possibly (p)ppGpp with moderate affinity, with high nucleotide exchange rates and a fairly low GTP hydrolysis rate. Plays a role in control of the cell cycle, stress response, ribosome biogenesis and in those bacteria that undergo differentiation, in morphogenesis control. The polypeptide is GTPase Obg (Pelotomaculum thermopropionicum (strain DSM 13744 / JCM 10971 / SI)).